The chain runs to 320 residues: D-alanine--D-alanine ligase (320 aa).

Residues 104 to 308 (KRVCLSHGVP…YEDLCVEILR (205 aa)) enclose the ATP-grasp domain. 134-189 (AAEFGMPLMLKAPHEGSTIGIAKVETAEGMQAGFDLCAKYDDVVLVEQFVKGRELT) contributes to the ATP binding site. 3 residues coordinate Mg(2+): Asp-261, Glu-275, and Asn-277.

The protein belongs to the D-alanine--D-alanine ligase family. It depends on Mg(2+) as a cofactor. Mn(2+) is required as a cofactor.

Its subcellular location is the cytoplasm. It catalyses the reaction 2 D-alanine + ATP = D-alanyl-D-alanine + ADP + phosphate + H(+). Its pathway is cell wall biogenesis; peptidoglycan biosynthesis. In terms of biological role, cell wall formation. This chain is D-alanine--D-alanine ligase, found in Janthinobacterium sp. (strain Marseille) (Minibacterium massiliensis).